We begin with the raw amino-acid sequence, 514 residues long: GTPase-activating protein gyp1 (514 aa).

Disordered regions lie at residues 17–65 (LWNG…QPPK) and 130–164 (LPRM…LHSS). Composition is skewed to polar residues over residues 18–28 (WNGSSSATSDP) and 135–158 (RSTT…TTSR). The Rab-GAP TBC domain occupies 216–443 (GIPSEHRPIV…RMWDTYMAEG (228 aa)).

The protein resides in the golgi apparatus. Its subcellular location is the golgi stack. The protein localises to the cytoplasm. It localises to the nucleus. Stimulates specifically the GTPase activity of ypt1. Functions on the Golgi as a negative regulator of ypt1. The polypeptide is GTPase-activating protein gyp1 (Schizosaccharomyces pombe (strain 972 / ATCC 24843) (Fission yeast)).